The chain runs to 626 residues: 4-hydroxy-3-methylbut-2-en-1-yl diphosphate synthase (flavodoxin) (626 aa).

4 residues coordinate [4Fe-4S] cluster: C521, C524, C555, and E562.

The protein belongs to the IspG family. [4Fe-4S] cluster is required as a cofactor.

It carries out the reaction (2E)-4-hydroxy-3-methylbut-2-enyl diphosphate + oxidized [flavodoxin] + H2O + 2 H(+) = 2-C-methyl-D-erythritol 2,4-cyclic diphosphate + reduced [flavodoxin]. It functions in the pathway isoprenoid biosynthesis; isopentenyl diphosphate biosynthesis via DXP pathway; isopentenyl diphosphate from 1-deoxy-D-xylulose 5-phosphate: step 5/6. Converts 2C-methyl-D-erythritol 2,4-cyclodiphosphate (ME-2,4cPP) into 1-hydroxy-2-methyl-2-(E)-butenyl 4-diphosphate. The protein is 4-hydroxy-3-methylbut-2-en-1-yl diphosphate synthase (flavodoxin) of Bacteroides fragilis (strain YCH46).